The chain runs to 380 residues: 1-deoxy-D-xylulose 5-phosphate reductoisomerase (380 aa).

NADPH contacts are provided by Thr10, Gly11, Ser12, Ile13, Gly36, Arg37, Asn38, and Asn120. Lys121 serves as a coordination point for 1-deoxy-D-xylulose 5-phosphate. Glu122 serves as a coordination point for NADPH. Position 146 (Asp146) interacts with Mn(2+). Ser147, Glu148, Ser172, and His195 together coordinate 1-deoxy-D-xylulose 5-phosphate. Glu148 is a binding site for Mn(2+). Gly201 contributes to the NADPH binding site. 1-deoxy-D-xylulose 5-phosphate contacts are provided by Ser208, Asn213, Lys214, and Glu217. Residue Glu217 participates in Mn(2+) binding.

The protein belongs to the DXR family. Mg(2+) is required as a cofactor. It depends on Mn(2+) as a cofactor.

It catalyses the reaction 2-C-methyl-D-erythritol 4-phosphate + NADP(+) = 1-deoxy-D-xylulose 5-phosphate + NADPH + H(+). The protein operates within isoprenoid biosynthesis; isopentenyl diphosphate biosynthesis via DXP pathway; isopentenyl diphosphate from 1-deoxy-D-xylulose 5-phosphate: step 1/6. Functionally, catalyzes the NADPH-dependent rearrangement and reduction of 1-deoxy-D-xylulose-5-phosphate (DXP) to 2-C-methyl-D-erythritol 4-phosphate (MEP). This Listeria monocytogenes serotype 4a (strain HCC23) protein is 1-deoxy-D-xylulose 5-phosphate reductoisomerase.